We begin with the raw amino-acid sequence, 486 residues long: CDT1-like protein b (486 aa).

Disordered stretches follow at residues 273-294 and 348-371; these read PEGGDDNSLRSTNSLARGPSRS and VKDDISNESGDEKSNYEGDNASDD. Positions 281-294 are enriched in polar residues; that stretch reads LRSTNSLARGPSRS. A compositionally biased stretch (basic and acidic residues) spans 348–363; sequence VKDDISNESGDEKSNY.

The protein belongs to the Cdt1 family. In terms of tissue distribution, expressed in proliferating (e.g. shoot and root apical meristems, organ primordia, guard cells and stomatal lineage) and endoreplicating cells (e.g. developing trichomes).

The protein localises to the nucleus. Its function is as follows. Member of the pre-replication complex. Regulates endoreduplication. Involved in the coordination of cell and plastid division. The protein is CDT1-like protein b (CDT1B) of Arabidopsis thaliana (Mouse-ear cress).